Consider the following 726-residue polypeptide: MDIKDVSNESKYIDYLKQLQGAAERAARRKGQALMANSYRSQSDENTIATTLVPAPYPPCIVSANDLEAIMISDMRLETHHRGKKIMLRVLTPPDRMTAVMAIVEDEKGIAVLLQLYHQPEESIVPATEILSPNMVCILKEPFFKCATDGTYSLRVDHPGDIIWMDGADDRIPSHWRPSMVILGENSSDIRKQGKGAVQSKKWAEALRLYSSAIQAGQNVQERQLAFLNRSFVNMNMDRPKQALLDAEKATNPAMPSEKSLFRKARALYELGDYQQSLEMLEKLTQSYPENKAASSEKDRLNERLNEQRTGEYKFKQMYKQAEKTPPLIDCVTFSAPVEIRESPGRGKALFTTKAVSAGELLLCKKAFSYSFAGDEQSTKQTKILMNLATKRVVVGGQARLLTLIMQKLYHNSSLSAEFGDLHHADYQKAMVLETDGTPVVDSFLVEKIASLNGFGAPRTSRESFLQVLSSNRDMTGDEGFKYTTSGIWLLASRINHSCVGNCRPSFIGDMQIVRATKDVPAKTEIFFCYRPPVPFESYQETQKGLNHWGFTCDCGLCLRKKATSKAVFQRRKVLADDLQRLLDYPGSGNEAKSSRLMKALEKTYLTNNDCAIRLELWEPYFAFGAHLLKNNQLDIAAKMILKGLEALVHSIIACPPNDITDGPRLKVERWGVANDAVPWAFKNLANVYGQLAPELCSAAENYAEVSYTMVVGEKETWPEVLSSSS.

3 TPR repeats span residues 187 to 220, 224 to 257, and 258 to 291; these read SSDI…GQNV, QLAF…AMPS, and EKSL…YPEN. Residues 336-531 enclose the SET domain; the sequence is APVEIRESPG…AKTEIFFCYR (196 aa). Tyr-530 is a binding site for S-adenosyl-L-methionine.

Belongs to the class V-like SAM-binding methyltransferase superfamily.

It functions in the pathway mycotoxin biosynthesis. Methyltransferase; part of the gene cluster that mediates the biosynthesis of gramillins A and B, bicyclic lipopeptides that induce cell death in maize leaves but not in wheat leaves. The nonribosomal peptide synthetase GRA1 incorporates respectively a glutamic adic (Glu), a leucine (Leu), a serine (Ser), a hydroxyglutamine (HOGln), a 2-amino decanoic acid, and 2 cysteins (CysB and CysA). The biosynthesis of 2-amino decanoic acid incorporated in gramillins could be initiated by a fatty acid synthase composed of the alpha and beta subunits FGSG_00036 and FGSG_11656. The cytochrome P450 monooxygenase FGSG_15680 could hydroxylate the fatty acid chain. Subsequent oxidation to the ketone by the oxidoreductase FGSG_00048 and transamination by aminotransferase FGSG_00049 could form 2-amino-decanoic acid. On the other hand, FGSG_15680 could also be responsible for the HO-modified glutamine at the gamma-position. Whether hydroxylation occurs on the fully assembled product or on the Gln residue prior to assembly into the gramillins requires further proof. The thioredoxin FGSG_00043 could also be required for the disulfide-bond formation between CysA and CysB. The specific involvement of the remaining proteins from the cluster is more difficult to discern, but could have broader regulatory (FGSG_00040 and FGSG_11657) or enzymatic functions (FGSG_00044 and FGSG_00045). The final C-domain of GRA1 does not possess the expected sequence of a termination CT domain, often implicated in macrocyclization and release of a cyclopeptidein fungal NRPs; and the thioesterase FGSG_00047 may act in concert with the terminal C-domain of GRA1 to catalyze the formation of the macrocyclic anhydride and release of the products. The chain is Methyltransferase FGSG_00040 from Gibberella zeae (strain ATCC MYA-4620 / CBS 123657 / FGSC 9075 / NRRL 31084 / PH-1) (Wheat head blight fungus).